Reading from the N-terminus, the 305-residue chain is MVGHAATDVPPTMAVKIFSAGVAACVADIITFPLDTAKVRLQIQGECLTSSAFRYKGVLGTIITLAKTEGPVKLYSGLPAGLQRQISFASLRIGLYDTVQEFFTTGKEASLGSKISAGLTTGGVAVFIGQPTEVVKVRLQAQSHLHGPKPRYTGTYNAYRIIATTEGLTGLWKGTTPNLTRNVIINCTELVTYDLMKEALVKNKLLADDVPCHFVSAVVAGFCTTVLSSPVDVVKTRFVNSSPGQYTSVPNCAMMMLTREGPSAFFKGFVPSFLRLGSWNIIMFVCFEQLKRELMKSRQAMDCAT.

Over 1–10 the chain is Mitochondrial intermembrane; sequence MVGHAATDVP. A helical transmembrane segment spans residues 11–32; that stretch reads PTMAVKIFSAGVAACVADIITF. Solcar repeat units follow at residues 11-102, 109-199, and 208-293; these read PTMA…VQEF, ASLG…MKEA, and DDVP…LKRE. Residues 33 to 73 are Mitochondrial matrix-facing; sequence PLDTAKVRLQIQGECLTSSAFRYKGVLGTIITLAKTEGPVK. Lys-56 provides a ligand contact to fatty acid 16:0. The helical transmembrane segment at 74-96 threads the bilayer; sequence LYSGLPAGLQRQISFASLRIGLY. The Mitochondrial intermembrane segment spans residues 97–114; the sequence is DTVQEFFTTGKEASLGSK. The helical transmembrane segment at 115–131 threads the bilayer; the sequence is ISAGLTTGGVAVFIGQP. Topologically, residues 132 to 176 are mitochondrial matrix; the sequence is TEVVKVRLQAQSHLHGPKPRYTGTYNAYRIIATTEGLTGLWKGTT. The helical transmembrane segment at 177-193 threads the bilayer; sequence PNLTRNVIINCTELVTY. Residues 194-210 are Mitochondrial intermembrane-facing; the sequence is DLMKEALVKNKLLADDV. A helical membrane pass occupies residues 211–230; the sequence is PCHFVSAVVAGFCTTVLSSP. Topologically, residues 231–264 are mitochondrial matrix; the sequence is VDVVKTRFVNSSPGQYTSVPNCAMMMLTREGPSA. Cys-252 is subject to Cysteine sulfenic acid (-SOH). Residues 265–287 traverse the membrane as a helical segment; sequence FFKGFVPSFLRLGSWNIIMFVCF. Residue Lys-267 participates in fatty acid 16:0 binding. The Mitochondrial intermembrane portion of the chain corresponds to 288 to 305; the sequence is EQLKRELMKSRQAMDCAT.

This sequence belongs to the mitochondrial carrier (TC 2.A.29) family. Most probably functions as a monomer. Binds one purine nucleotide per monomer. However, has also been suggested to function as a homodimer or a homotetramer. Tightly associates with cardiolipin in the mitochondrion inner membrane; may stabilize and regulate its activity. Post-translationally, may undergo sulfenylation upon cold exposure. May increase the sensitivity of UCP1 thermogenic function to the activation by noradrenaline probably through structural effects. In terms of processing, may undergo ubiquitin-mediated proteasomal degradation.

It localises to the mitochondrion inner membrane. The enzyme catalyses H(+)(in) = H(+)(out). Has no constitutive proton transporter activity and has to be activated by long-chain fatty acids/LCFAs. Inhibited by purine nucleotides. Both purine nucleotides and LCFAs bind the cytosolic side of the transporter and directly compete to activate or inhibit it. Activated by noradrenaline and reactive oxygen species. Despite lacking canonical translational encoding for selenocysteine, a small pool of the protein has been observed to selectively incorporate selenocysteine at 'Cys-252'. Selenocysteine-modified protein is highly sensitive to redox modification and may constitute a pool of protein highly sensitive to activation by elevated levels of reactive oxygen species (ROS). Its function is as follows. Mitochondrial protein responsible for thermogenic respiration, a specialized capacity of brown adipose tissue and beige fat that participates in non-shivering adaptive thermogenesis to temperature and diet variations and more generally to the regulation of energy balance. Functions as a long-chain fatty acid/LCFA and proton symporter, simultaneously transporting one LCFA and one proton through the inner mitochondrial membrane. However, LCFAs remaining associated with the transporter via their hydrophobic tails, it results in an apparent transport of protons activated by LCFAs. Thereby, dissipates the mitochondrial proton gradient and converts the energy of substrate oxydation into heat instead of ATP. Regulates the production of reactive oxygen species/ROS by mitochondria. The chain is Mitochondrial brown fat uncoupling protein 1 from Ovis aries (Sheep).